A 567-amino-acid polypeptide reads, in one-letter code: UPF0313 protein TM_0337 (567 aa).

The Radical SAM core domain occupies 288–560; sequence KAIETVKFSI…NKMKENVLFK (273 aa). Residues C303, C307, and C310 each contribute to the [4Fe-4S] cluster site.

The protein belongs to the UPF0313 family. The cofactor is [4Fe-4S] cluster.

This is UPF0313 protein TM_0337 from Thermotoga maritima (strain ATCC 43589 / DSM 3109 / JCM 10099 / NBRC 100826 / MSB8).